The primary structure comprises 153 residues: Lipoprotein signal peptidase (153 aa).

3 helical membrane-spanning segments follow: residues 6–26 (IVAV…SYIV), 60–80 (QQLL…WYLH), and 85–105 (DSFW…GNFI). Catalysis depends on residues Asp-115 and Asp-131. Residues 124–144 (FAIFNVADSYLTVGVIILLIA) form a helical membrane-spanning segment.

It belongs to the peptidase A8 family.

Its subcellular location is the cell membrane. The enzyme catalyses Release of signal peptides from bacterial membrane prolipoproteins. Hydrolyzes -Xaa-Yaa-Zaa-|-(S,diacylglyceryl)Cys-, in which Xaa is hydrophobic (preferably Leu), and Yaa (Ala or Ser) and Zaa (Gly or Ala) have small, neutral side chains.. It participates in protein modification; lipoprotein biosynthesis (signal peptide cleavage). Functionally, this protein specifically catalyzes the removal of signal peptides from prolipoproteins. This Streptococcus pneumoniae (strain ATCC BAA-255 / R6) protein is Lipoprotein signal peptidase.